The sequence spans 152 residues: Ribosome maturation factor RimP (152 aa).

It belongs to the RimP family.

The protein localises to the cytoplasm. Functionally, required for maturation of 30S ribosomal subunits. This is Ribosome maturation factor RimP from Clostridium beijerinckii (strain ATCC 51743 / NCIMB 8052) (Clostridium acetobutylicum).